Consider the following 141-residue polypeptide: Hemoglobin subunit alpha-D (141 aa).

The Globin domain occupies 1–141 (MLTAEDKKLI…VSAVLAEKYR (141 aa)). Heme b contacts are provided by H58 and H87.

It belongs to the globin family. In terms of assembly, heterotetramer of two alpha-D chains and two beta chains. As to expression, red blood cells.

Involved in oxygen transport from the lung to the various peripheral tissues. The protein is Hemoglobin subunit alpha-D (HBAD) of Meleagris gallopavo (Wild turkey).